The following is a 474-amino-acid chain: Alkylcitrate dehydratase phiI (474 aa).

It belongs to the PrpD family. In terms of assembly, monomer.

It carries out the reaction (4E,11E)-2-hydroxytrideca-4,11-dien-1,2,3-tricarboxylate + 2 H(+) = [4-(deca-1,8-diyl)-2,5-dioxo-2,5-dihydro-3-furanyl]acetate + 2 H2O. It functions in the pathway secondary metabolite biosynthesis. Functionally, alkylcitrate dehydratasee; part of the gene cluster that mediates the biosynthesis of the antihypercholesterolemic agents phomoidrides which are dimeric anhydrides. Within the pathway, the alkylcitrate synthase (ACS) tstiJ and the alkylcitrate dehydratase (ACDH) tstI produce the decarboxylated monomeric anhydrides by coupling the C12-fatty acyl product from phiA with oxalacetic acid. The pathway begins with the highly reducing polyketide synthase tstA that catalyzes the formation of a C12-fatty acyl-ACP, starting from one acetate and 5 malonate units. The hydrolase tstM is involved in the release of the C12-fatty acyl chain from phiA. The alkylcitrate synthase (ACS) tstJ and the alkylcitrate dehydratase (ACDH) tstI then give rise to decarboxylated monomeric anhydrides by coupling the C12-fatty acyl chain with oxalacetic acid. The cyclase tstC is responsible for the dimerization of the monomeric anhydrides which leads to the production of prephomoidride that contains the characteristic bicyclo[4.3.1]deca-1,6-diene system of phomoidrides. Iterative oxidation catalyzed by the alpha-ketoglutarate-dependent dioxygenase tstK produced then phomoidride A. Finally, the methyltransferase tstE converts phomoidride A to phomoidride B via an acetalization reaction. The phosphatidylethanolamine-binding protein tstB and tstN are not essential for dimerization and their functions have still to be determined. The chain is Alkylcitrate dehydratase phiI from Talaromyces stipitatus (strain ATCC 10500 / CBS 375.48 / QM 6759 / NRRL 1006) (Penicillium stipitatum).